The chain runs to 209 residues: Imidazole glycerol phosphate synthase subunit HisH (209 aa).

Residues 3–209 form the Glutamine amidotransferase type-1 domain; the sequence is SVAVIDYGMG…ANFLTWNGVS (207 aa). The active-site Nucleophile is cysteine 82. Residues histidine 187 and glutamate 189 contribute to the active site.

In terms of assembly, heterodimer of HisH and HisF.

Its subcellular location is the cytoplasm. It carries out the reaction 5-[(5-phospho-1-deoxy-D-ribulos-1-ylimino)methylamino]-1-(5-phospho-beta-D-ribosyl)imidazole-4-carboxamide + L-glutamine = D-erythro-1-(imidazol-4-yl)glycerol 3-phosphate + 5-amino-1-(5-phospho-beta-D-ribosyl)imidazole-4-carboxamide + L-glutamate + H(+). The enzyme catalyses L-glutamine + H2O = L-glutamate + NH4(+). It functions in the pathway amino-acid biosynthesis; L-histidine biosynthesis; L-histidine from 5-phospho-alpha-D-ribose 1-diphosphate: step 5/9. IGPS catalyzes the conversion of PRFAR and glutamine to IGP, AICAR and glutamate. The HisH subunit catalyzes the hydrolysis of glutamine to glutamate and ammonia as part of the synthesis of IGP and AICAR. The resulting ammonia molecule is channeled to the active site of HisF. The polypeptide is Imidazole glycerol phosphate synthase subunit HisH (Nitrosococcus oceani (strain ATCC 19707 / BCRC 17464 / JCM 30415 / NCIMB 11848 / C-107)).